The following is a 1462-amino-acid chain: MALLYRRMSMLLNIILAYIFLCAICVQGSVKQEWAEIGKNVSLECASENEAVAWKLGNQTINKNHTRYKIRTEPLKSNDDGSENNDSQDFIKYKNVLALLDVNIKDSGNYTCTAQTGQNHSTEFQVRPYLPSKVLQSTPDRIKRKIKQDVMLYCLIEMYPQNETTNRNLKWLKDGSQFEFLDTFSSISKLNDTHLNFTLEFTEVYKKENGTYKCTVFDDTGLEITSKEITLFVMEVPQVSIDFAKAVGANKIYLNWTVNDGNDPIQKFFITLQEAGTPTFTYHKDFINGSHTSYILDHFKPNTTYFLRIVGKNSIGNGQPTQYPQGITTLSYDPIFIPKVETTGSTASTITIGWNPPPPDLIDYIQYYELIVSESGEVPKVIEEAIYQQNSRNLPYMFDKLKTATDYEFRVRACSDLTKTCGPWSENVNGTTMDGVATKPTNLSIQCHHDNVTRGNSIAINWDVPKTPNGKVVSYLIHLLGNPMSTVDREMWGPKIRRIDEPHHKTLYESVSPNTNYTVTVSAITRHKKNGEPATGSCLMPVSTPDAIGRTMWSKVNLDSKYVLKLYLPKISERNGPICCYRLYLVRINNDNKELPDPEKLNIATYQEVHSDNVTRSSAYIAEMISSKYFRPEIFLGDEKRFSENNDIIRDNDEICRKCLEGTPFLRKPEIIHIPPQGSLSNSDSELPILSEKDNLIKGANLTEHALKILESKLRDKRNAVTSDENPILSAVNPNVPLHDSSRDVFDGEIDINSNYTGFLEIIVRDRNNALMAYSKYFDIITPATEAEPIQSLNNMDYYLSIGVKAGAVLLGVILVFIVLWVFHHKKTKNELQGEDTLTLRDSLSRALFGRRNHNHSHFITSGNHKGFDAGPIHRLDLENAYKNRHKDTDYGFLREYEMLPNRFSDRTTKNSDLKENACKNRYPDIKAYDQTRVKLAVINGLQTTDYINANFVIGYKERKKFICAQGPMESTIDDFWRMIWEQHLEIIVMLTNLEEYNKAKCAKYWPEKVFDTKQFGDILVKFAQERKTGDYIERTLNVSKNKANVGEEEDRRQITQYHYLTWKDFMAPEHPHGIIKFIRQINSVYSLQRGPILVHCSAGVGRTGTLVALDSLIQQLEEEDSVSIYNTVCDLRHQRNFLVQSLKQYIFLYRALLDTGTFGNTDICIDTMASAIESLKRKPNEGKCKLEVEFEKLLATADEISKSCSVGENEENNMKNRSQEIIPYDRNRVILTPLPMRENSTYINASFIEGYDNSETFIIAQDPLENTIGDFWRMISEQSVTTLVMISEIGDGPRKCPRYWADDEVQYDHILVKYVHSESCPYYTRREFYVTNCKIDDTLKVTQFQYNGWPTVDGEVPEVCRGIIELVDQAYNHYKNNKNSGCRSPLTVHCSLGTDRSSIFVAMCILVQHLRLEKCVDICATTRKLRSQRTGLINSYAQYEFLHRAIINYSDLHHIAESTLD.

Positions 1-28 are cleaved as a signal peptide; the sequence is MALLYRRMSMLLNIILAYIFLCAICVQG. 2 consecutive Ig-like C2-type domains span residues 29 to 125 and 131 to 230; these read SVKQ…TEFQ and PSKV…KEIT. Topologically, residues 29-805 are extracellular; that stretch reads SVKQEWAEIG…MDYYLSIGVK (777 aa). 20 N-linked (GlcNAc...) asparagine glycosylation sites follow: Asn40, Asn58, Asn64, Asn85, Asn109, Asn119, Asn162, Asn191, Asn196, Asn209, Asn255, Asn288, Asn302, Asn429, Asn442, Asn451, Asn516, Asn613, Asn701, and Asn755. A disulfide bridge links Cys45 with Cys112. Cys154 and Cys214 are disulfide-bonded. Fibronectin type-III domains are found at residues 237-332, 334-435, and 439-547; these read PQVS…TLSY, PIFI…TMDG, and KPTN…TPDA. Residues 806 to 823 traverse the membrane as a helical segment; the sequence is AGAVLLGVILVFIVLWVF. The Cytoplasmic portion of the chain corresponds to 824–1462; it reads HHKKTKNELQ…LHHIAESTLD (639 aa). 2 Tyrosine-protein phosphatase domains span residues 893–1156 and 1187–1450; these read FLRE…LLDT and LEVE…IINY. Catalysis depends on phosphocysteine intermediate residues Cys1097 and Cys1391.

Belongs to the protein-tyrosine phosphatase family. Receptor class subfamily.

It localises to the membrane. It carries out the reaction O-phospho-L-tyrosyl-[protein] + H2O = L-tyrosyl-[protein] + phosphate. Functionally, possible cell adhesion receptor. This Drosophila melanogaster (Fruit fly) protein is Tyrosine-protein phosphatase 69D (Ptp69D).